We begin with the raw amino-acid sequence, 96 residues long: MALTLADVDKIARLSRLHLTAAEKEKSLQELNDIFAMVEQMQNINTDGIEPMAHPHEAALRLREDEVTETDRAAEYQAVAPEVRNRLYIVPQVIEE.

The protein belongs to the GatC family. In terms of assembly, heterotrimer of A, B and C subunits.

It catalyses the reaction L-glutamyl-tRNA(Gln) + L-glutamine + ATP + H2O = L-glutaminyl-tRNA(Gln) + L-glutamate + ADP + phosphate + H(+). The catalysed reaction is L-aspartyl-tRNA(Asn) + L-glutamine + ATP + H2O = L-asparaginyl-tRNA(Asn) + L-glutamate + ADP + phosphate + 2 H(+). Functionally, allows the formation of correctly charged Asn-tRNA(Asn) or Gln-tRNA(Gln) through the transamidation of misacylated Asp-tRNA(Asn) or Glu-tRNA(Gln) in organisms which lack either or both of asparaginyl-tRNA or glutaminyl-tRNA synthetases. The reaction takes place in the presence of glutamine and ATP through an activated phospho-Asp-tRNA(Asn) or phospho-Glu-tRNA(Gln). This Neisseria meningitidis serogroup A / serotype 4A (strain DSM 15465 / Z2491) protein is Glutamyl-tRNA(Gln) amidotransferase subunit C.